The sequence spans 441 residues: 5-methylthioadenosine/S-adenosylhomocysteine deaminase (441 aa).

Zn(2+) is bound by residues His-70 and His-72. Substrate-binding residues include Glu-99 and His-191. Zn(2+) is bound at residue His-218. The substrate site is built by Glu-221 and Asp-306. Asp-306 serves as a coordination point for Zn(2+).

It belongs to the metallo-dependent hydrolases superfamily. MTA/SAH deaminase family. It depends on Zn(2+) as a cofactor.

It catalyses the reaction S-adenosyl-L-homocysteine + H2O + H(+) = S-inosyl-L-homocysteine + NH4(+). The catalysed reaction is S-methyl-5'-thioadenosine + H2O + H(+) = S-methyl-5'-thioinosine + NH4(+). Functionally, catalyzes the deamination of 5-methylthioadenosine and S-adenosyl-L-homocysteine into 5-methylthioinosine and S-inosyl-L-homocysteine, respectively. Is also able to deaminate adenosine. The polypeptide is 5-methylthioadenosine/S-adenosylhomocysteine deaminase (Lawsonia intracellularis (strain PHE/MN1-00)).